A 380-amino-acid polypeptide reads, in one-letter code: TPR repeat-containing thioredoxin TDX (380 aa).

Valine 2 carries the N-acetylvaline modification. The span at 49 to 59 (TERDYEDKAET) shows a compositional bias: basic and acidic residues. A disordered region spans residues 49-115 (TERDYEDKAE…DENRDDAQSE (67 aa)). Residues 69-91 (DDDDDIMESDVELDNSDVVEPDN) are compositionally biased toward acidic residues. Over residues 106–115 (DENRDDAQSE) the composition is skewed to basic and acidic residues. TPR repeat units follow at residues 112 to 145 (AQSE…NPTS), 147 to 179 (ILYA…NSDS), and 181 to 213 (KGYK…DYDE). A compositionally biased stretch (basic and acidic residues) spans 240-263 (RKEKELQRAERERRKQQEAQEREA). Residues 240–265 (RKEKELQRAERERRKQQEAQEREAQA) form a disordered region. The Thioredoxin domain maps to 252-378 (RRKQQEAQER…LEQKIAQHSS (127 aa)). Catalysis depends on nucleophile residues cysteine 304 and cysteine 307. Cysteine 304 and cysteine 307 are oxidised to a cystine.

Belongs to the thioredoxin family. In terms of assembly, oligomerization under high temperature.

Its function is as follows. Thiol-disulfide oxidoreductase that possesses insulin disulfide bonds reducing activity, disulfide reductase, foldase chaperone and holdase chaperone activities. Heat shock causes oligomerization and formation of high molecular weiht (HMW) complexes with concomitant functional switching from a disulfide reductase and foldase chaperone to a holdase chaperone. May interact with HSP70 proteins through the TPR repeats. The polypeptide is TPR repeat-containing thioredoxin TDX (TDX) (Arabidopsis thaliana (Mouse-ear cress)).